Here is a 142-residue protein sequence, read N- to C-terminus: Small ribosomal subunit protein bS6 (142 aa).

Residues 110–142 are disordered; the sequence is NKKPSHAKEKHEKTEHAHSHHAEEAKSTESHSE.

It belongs to the bacterial ribosomal protein bS6 family.

In terms of biological role, binds together with bS18 to 16S ribosomal RNA. The polypeptide is Small ribosomal subunit protein bS6 (Helicobacter pylori (strain G27)).